The primary structure comprises 104 residues: Pyrimidine/purine nucleoside phosphorylase (104 aa).

Belongs to the nucleoside phosphorylase PpnP family.

The enzyme catalyses a purine D-ribonucleoside + phosphate = a purine nucleobase + alpha-D-ribose 1-phosphate. The catalysed reaction is adenosine + phosphate = alpha-D-ribose 1-phosphate + adenine. It carries out the reaction cytidine + phosphate = cytosine + alpha-D-ribose 1-phosphate. It catalyses the reaction guanosine + phosphate = alpha-D-ribose 1-phosphate + guanine. The enzyme catalyses inosine + phosphate = alpha-D-ribose 1-phosphate + hypoxanthine. The catalysed reaction is thymidine + phosphate = 2-deoxy-alpha-D-ribose 1-phosphate + thymine. It carries out the reaction uridine + phosphate = alpha-D-ribose 1-phosphate + uracil. It catalyses the reaction xanthosine + phosphate = alpha-D-ribose 1-phosphate + xanthine. Its function is as follows. Catalyzes the phosphorolysis of diverse nucleosides, yielding D-ribose 1-phosphate and the respective free bases. Can use uridine, adenosine, guanosine, cytidine, thymidine, inosine and xanthosine as substrates. Also catalyzes the reverse reactions. This is Pyrimidine/purine nucleoside phosphorylase from Herminiimonas arsenicoxydans.